The chain runs to 296 residues: Putative mannose 6-phosphate receptor-like protein C530.09c (296 aa).

A signal peptide spans 1-25 (MRLLTCLINVLAGLTLFSQFQRAFG). The Lumenal portion of the chain corresponds to 26–206 (LTITRRGFKV…TVKKDSTLNP (181 aa)). The MRH domain maps to 42–197 (PFCALHHPNT…EWKTIHACPT (156 aa)). A disulfide bond links C44 and C87. N-linked (GlcNAc...) asparagine glycosylation is found at N64, N81, N93, N96, and N143. 2 disulfide bridges follow: C147–C183 and C163–C195. Residues 207 to 227 (VSVFLLFCAIAFLAYFVGGFV) form a helical membrane-spanning segment. Residues 228-249 (YQRVVLNARGLRQIPNYEMWRS) are Cytoplasmic-facing. Residues 250 to 270 (LFGFISDIVIILYSSILSILP) form a helical membrane-spanning segment. Residues 271 to 296 (SSITRMRGNRRNIDYVEDALIDDIDT) are Lumenal-facing.

Belongs to the MRL1/IGF2R family.

The protein localises to the golgi apparatus. Its subcellular location is the trans-Golgi network membrane. The protein resides in the endosome membrane. This chain is Putative mannose 6-phosphate receptor-like protein C530.09c, found in Schizosaccharomyces pombe (strain 972 / ATCC 24843) (Fission yeast).